Here is a 107-residue protein sequence, read N- to C-terminus: Defensin-like protein 242 (107 aa).

A signal peptide spans 1–22; the sequence is MKVVAIFLASCVLFSLIPTHLS. Cystine bridges form between Cys45/Cys100, Cys55/Cys84, Cys65/Cys94, and Cys82/Cys96.

This sequence belongs to the DEFL family.

It is found in the secreted. The polypeptide is Defensin-like protein 242 (SCRL10) (Arabidopsis thaliana (Mouse-ear cress)).